A 589-amino-acid chain; its full sequence is Transmembrane 9 superfamily member 5 (589 aa).

The signal sequence occupies residues 1-24 (MAQFLLTVLQVLLALTFWIGIGSG). Residues 25–227 (SSNHYNAGDH…SFHPISQKIH (203 aa)) lie on the Lumenal side of the membrane. The helical transmembrane segment at 228–248 (FFSFLNSITVVVLLIGLISFL) threads the bilayer. Residues 249–291 (FMRHLKNELRSYSIGDEEERKEAGWKLVHSDVFRCPRNISWLC) lie on the Cytoplasmic side of the membrane. The helical transmembrane segment at 292–312 (AILGTGTQLLILIIALFALAF) threads the bilayer. Over 313–321 (TGFLYPYNR) the chain is Lumenal. Residues 322-342 (GMLLTSLVIMYTLTSIVAGYT) form a helical membrane-spanning segment. Residues 343–361 (STSFHSQFEGNKQKRSVRL) are Cytoplasmic-facing. The helical transmembrane segment at 362–382 (AGILYPVPFFIILSVLNTVAI) threads the bilayer. The Lumenal segment spans residues 383–394 (TYGATAALPFGT). A helical transmembrane segment spans residues 395-415 (IVIIILIFTLLNIPFLMLGGV). The Cytoplasmic segment spans residues 416 to 450 (LGNRFGLLEFQPPSAVKRNPREIPPQNWYRRKLYQ). A helical transmembrane segment spans residues 451–471 (VFLGGFVPFSAVVLEWHQLYA). Over 472–482 (SLWGFKIYTSP) the chain is Lumenal. A helical transmembrane segment spans residues 483-503 (GIMLFTFIVLIFLSSSVGIIL). The Cytoplasmic segment spans residues 504-518 (TYIQLSGEDHEWWWR). Residues 519–539 (SILCGGFTAVFMYGYGVLFYL) form a helical membrane-spanning segment. Residues 540 to 550 (RSDMTGFLQLS) lie on the Lumenal side of the membrane. Residues 551-571 (FYLGYTALLCYALFLVLGTIS) traverse the membrane as a helical segment. At 572–589 (FLASLMFIRHIYRSVKLE) the chain is on the cytoplasmic side. Positions 578 to 583 (FIRHIY) match the Endoplasmic reticulum export signal motif. The Golgi retention signal motif lies at 587 to 589 (KLE).

Belongs to the nonaspanin (TM9SF) (TC 9.A.2) family. Expressed in the root cap and in giant cells.

The protein localises to the endosome membrane. It localises to the golgi apparatus membrane. This Arabidopsis thaliana (Mouse-ear cress) protein is Transmembrane 9 superfamily member 5.